The following is a 562-amino-acid chain: Formate--tetrahydrofolate ligase (562 aa).

An ATP-binding site is contributed by 71–78; it reads TPAGEGKS.

The protein belongs to the formate--tetrahydrofolate ligase family.

The catalysed reaction is (6S)-5,6,7,8-tetrahydrofolate + formate + ATP = (6R)-10-formyltetrahydrofolate + ADP + phosphate. It participates in one-carbon metabolism; tetrahydrofolate interconversion. The sequence is that of Formate--tetrahydrofolate ligase from Bacillus cereus (strain ATCC 10987 / NRS 248).